Here is a 585-residue protein sequence, read N- to C-terminus: MDRVESEEPMDGFESPVFSENTSSNSGWCSDAFSDSYIAYNPALLLKNDLLFSELLFASHLINVPRAIENNVTYEASSAVGVDNEMTSSTTEFIEEIGDVLALDRACLVCRTLDLYKRKFGLTPEWVADYAMLCMKSLASPPCAVVTFSAAFEFVYLMDRYYLCRYNVTLVGSFARRTLSLLDIQRHFFLHVCFRTDGGLPGIRPPPGKEMANKVRYSNYSFFVQAVVRAALLSISTSRLDETETRKSFYFNQDGLTGGPQPLAAALANWKDCARMVDCSSSEHRTSGMITCAERALKEDIEFEDILIDKLKKSSYVEAAWGYADLALLLLSGVATWNVDERTNCAIETRVGCVKSYWQANRIENSRDVPKQFSKFTSEDACPEVAFGPILLTTLKNAKCRGRTNTECMLCCLLTIGHYWIALRQFKRDILAYSANNTSLFDCIEPVINAWSLDNPIKLKFPFNDEGRFITIVKAAGSEAVYKHLFCDLLCALSELQTNPKILFAHPTTADKEVLELYKAQLAAQNRFEGRVCAGLWTLAYAFKAYQIFPRKPTANAAFIRDGGLMLRRHAISLVSLEHTLSKYV.

Residues 1-25 (MDRVESEEPMDGFESPVFSENTSSN) are disordered. Positions 107, 110, 187, 193, 408, 411, 484, and 491 each coordinate Zn(2+). Zinc finger stretches follow at residues 107-193 (CLVC…LHVC) and 408-491 (CMLC…DLLC).

The protein belongs to the herpesviridae UL32 protein family.

It localises to the host cytoplasm. Its subcellular location is the host nucleus. Plays a role in efficient localization of neo-synthesized capsids to nuclear replication compartments, thereby controlling cleavage and packaging of virus genomic DNA. This chain is Packaging protein UL32 (26), found in Varicella-zoster virus (strain Dumas) (HHV-3).